Here is a 1063-residue protein sequence, read N- to C-terminus: Probable hemoglobin and hemoglobin-haptoglobin-binding protein 1 (1063 aa).

The first 24 residues, 1–24 (MTNFKFSLLACSIAFALNASIAYA), serve as a signal peptide directing secretion. 7 repeat units span residues 26 to 29 (QPTN), 30 to 33 (QPTN), 34 to 37 (QPTN), 38 to 41 (QPTN), 42 to 45 (QPTN), 46 to 49 (QPTN), and 50 to 53 (QPTN). Positions 26–53 (QPTNQPTNQPTNQPTNQPTNQPTNQPTN) are 7 X 4 AA tandem repeats of Q-P-T-N. Positions 28-55 (TNQPTNQPTNQPTNQPTNQPTNQPTNQN) are enriched in low complexity. The segment at 28–57 (TNQPTNQPTNQPTNQPTNQPTNQPTNQNSN) is disordered. The TonB box signature appears at 63–70 (EQINVSGS). Residues 66–200 (NVSGSSENIN…LGGSVIFETK (135 aa)) form the TBDR plug domain. In terms of domain architecture, TBDR beta-barrel spans 208 to 1063 (DKDYYLSYKR…NYRMSVQFEF (856 aa)). Positions 1046-1063 (NRFYAPGRNYRMSVQFEF) match the TonB C-terminal box motif.

It belongs to the TonB-dependent receptor family. Hemoglobin/haptoglobin binding protein subfamily.

Its subcellular location is the cell outer membrane. In terms of biological role, acts as a receptor for hemoglobin or the hemoglobin/haptoglobin complex of the human host and is required for heme uptake. The protein is Probable hemoglobin and hemoglobin-haptoglobin-binding protein 1 of Haemophilus influenzae (strain ATCC 51907 / DSM 11121 / KW20 / Rd).